The following is an 88-amino-acid chain: Cold-regulated protein BLT14 (88 aa).

The protein is Cold-regulated protein BLT14 (BLT14) of Hordeum vulgare (Barley).